Reading from the N-terminus, the 95-residue chain is Acylphosphatase (95 aa).

The Acylphosphatase-like domain occupies Cys-10–Arg-95. Catalysis depends on residues Arg-25 and Asn-43.

Belongs to the acylphosphatase family.

It catalyses the reaction an acyl phosphate + H2O = a carboxylate + phosphate + H(+). This chain is Acylphosphatase (acyP), found in Coxiella burnetii (strain Dugway 5J108-111).